The primary structure comprises 309 residues: Mitochondrial import receptor subunit TOM34 (309 aa).

Ser-8 is modified (phosphoserine). 3 TPR repeats span residues Val-9–Gln-42, Ser-51–Ser-84, and Lys-86–Val-118. Residue Ser-160 is modified to Phosphoserine. The interval Leu-161–Asp-189 is disordered. Residues Glu-164–Thr-178 are compositionally biased toward basic and acidic residues. A Phosphoserine modification is found at Ser-186. TPR repeat units lie at residues Ala-193–Glu-226, Ser-227–Asn-260, and Lys-262–Asn-294. Lys-197 participates in a covalent cross-link: Glycyl lysine isopeptide (Lys-Gly) (interchain with G-Cter in SUMO2).

It belongs to the Tom34 family. Interacts with HSP90A, VCP, ATP6V1D, KIAA0665, AMPK, and DMAP1 through its TPR repeat. As to expression, ubiquitous.

Its subcellular location is the cytoplasm. It is found in the mitochondrion outer membrane. Functionally, plays a role in the import of cytosolically synthesized preproteins into mitochondria. Binds the mature portion of precursor proteins. Interacts with cellular components, and possesses weak ATPase activity. May be a chaperone-like protein that helps to keep newly synthesized precursors in an unfolded import compatible state. The protein is Mitochondrial import receptor subunit TOM34 (TOMM34) of Homo sapiens (Human).